The chain runs to 430 residues: Agropine synthesis reductase (430 aa).

203–227 is an NAD(+) binding site; the sequence is LVSGSNRGVGKAIAEDLIAHGYRLS. Residue Ser333 coordinates substrate. Tyr346 functions as the Proton acceptor in the catalytic mechanism.

The protein belongs to the short-chain dehydrogenases/reductases (SDR) family.

It functions in the pathway opine metabolism; mannopine biosynthesis. Reduces deoxy-fructosyl-glutamine to mannopine. This is Agropine synthesis reductase (mas1) from Rhizobium rhizogenes (Agrobacterium rhizogenes).